The sequence spans 271 residues: ATP synthase subunit a (271 aa).

5 helical membrane-spanning segments follow: residues 31–51 (WDTILTSVIAGVIVVGLGLYM), 89–109 (FVAPMAVTLFVYILLCNWIGV), 124–144 (DINLTLTLALVVIVPMHIVSL), 186–206 (IFSGAIMVSLLALMPPYVLWL), and 216–236 (LGVGVIQAFIFALLTILYYAF). Residues 247–271 (DEHADGGDSSSRQASPTPLPAGQVR) form a disordered region.

This sequence belongs to the ATPase A chain family. F-type ATPases have 2 components, CF(1) - the catalytic core - and CF(0) - the membrane proton channel. CF(1) has five subunits: alpha(3), beta(3), gamma(1), delta(1), epsilon(1). CF(0) has three main subunits: a(1), b(2) and c(9-12). The alpha and beta chains form an alternating ring which encloses part of the gamma chain. CF(1) is attached to CF(0) by a central stalk formed by the gamma and epsilon chains, while a peripheral stalk is formed by the delta and b chains.

It localises to the cell membrane. Functionally, key component of the proton channel; it plays a direct role in the translocation of protons across the membrane. The chain is ATP synthase subunit a from Acidothermus cellulolyticus (strain ATCC 43068 / DSM 8971 / 11B).